A 327-amino-acid chain; its full sequence is Nucleotide-binding protein Mflv_3714 (327 aa).

Residues 1–22 (MTRQGMRDDLRGEADSVVHDGT) show a composition bias toward basic and acidic residues. Positions 1-29 (MTRQGMRDDLRGEADSVVHDGTDDIDNEN) are disordered. 50–57 (GLSGAGRG) serves as a coordination point for ATP. 101–104 (DVRS) is a GTP binding site.

This sequence belongs to the RapZ-like family.

In terms of biological role, displays ATPase and GTPase activities. The sequence is that of Nucleotide-binding protein Mflv_3714 from Mycolicibacterium gilvum (strain PYR-GCK) (Mycobacterium gilvum (strain PYR-GCK)).